We begin with the raw amino-acid sequence, 505 residues long: Trans-cinnamate 4-monooxygenase (505 aa).

The helical transmembrane segment at 3–23 (LLLLEKTLLALFLAAITAITI) threads the bilayer. (E)-cinnamate contacts are provided by residues 213–218 (RSRLAQ) and A306. Heme is bound at residue C447.

It belongs to the cytochrome P450 family. It depends on heme as a cofactor.

Its subcellular location is the membrane. The enzyme catalyses (E)-cinnamate + reduced [NADPH--hemoprotein reductase] + O2 = (E)-4-coumarate + oxidized [NADPH--hemoprotein reductase] + H2O + H(+). The protein operates within phenylpropanoid metabolism; trans-4-coumarate biosynthesis; trans-4-coumarate from trans-cinnamate: step 1/1. Catalyzes the first oxidative step of the phenylpropanoid pathway in higher plants by transforming trans-cinnamate into p-coumarate. The compounds formed by this pathway are essential components for lignification, pollination, and defense against ultraviolet light, predators and pathogens. The chain is Trans-cinnamate 4-monooxygenase (CYP73A9) from Pisum sativum (Garden pea).